A 479-amino-acid polypeptide reads, in one-letter code: Glycogen synthase (479 aa).

Residue K15 coordinates ADP-alpha-D-glucose.

Belongs to the glycosyltransferase 1 family. Bacterial/plant glycogen synthase subfamily.

The enzyme catalyses [(1-&gt;4)-alpha-D-glucosyl](n) + ADP-alpha-D-glucose = [(1-&gt;4)-alpha-D-glucosyl](n+1) + ADP + H(+). It participates in glycan biosynthesis; glycogen biosynthesis. Synthesizes alpha-1,4-glucan chains using ADP-glucose. The sequence is that of Glycogen synthase from Acidiphilium cryptum (strain JF-5).